Here is a 491-residue protein sequence, read N- to C-terminus: Cholesterol 22-monohydroxylase CYP90B51 (491 aa).

The chain crosses the membrane as a helical span at residues 6 to 26; the sequence is ITFYCLSSILSVLLIFIFILI. Residue C437 coordinates heme.

The protein belongs to the cytochrome P450 family. As to expression, mainly expressed in leaves and seed pods and, to a lower extent, in flowers and stems.

It is found in the membrane. It carries out the reaction cholesterol + reduced [NADPH--hemoprotein reductase] + O2 = (22S)-22-hydroxycholesterol + oxidized [NADPH--hemoprotein reductase] + H2O + H(+). It participates in steroid metabolism; cholesterol metabolism. Canonical brassinosteroid (BR)-biosynthetic enzyme capable of converting cholesterol to 22S-hydroxycholesterol via sterol-C22 hydroxylation. The chain is Cholesterol 22-monohydroxylase CYP90B51 from Trigonella foenum-graecum (Fenugreek).